The chain runs to 748 residues: Pleckstrin homology domain-containing family M member 3 (748 aa).

Disordered regions lie at residues 88-107 (HAKEQNESTKRTYSDDPLLS) and 129-187 (NDSL…RNKN). Basic and acidic residues-rich tracts occupy residues 129–140 (NDSLDHLEDAPK) and 148–159 (SRSDVSHIDWKN). Polar residues predominate over residues 167–180 (QRSSSQGMHCTSPF). PH domains are found at residues 200–297 (NILK…EAIC) and 348–443 (NIIK…SAAN). A Phorbol-ester/DAG-type zinc finger spans residues 656–709 (SHVYSCSLCSQKGFICEICNNGEILYPFEENSTSRCENCGAVFHSDCKVRTVPC).

It is found in the cytoplasm. The protein resides in the golgi apparatus. It localises to the cell membrane. Its function is as follows. May play a role during muscle differentiation. The polypeptide is Pleckstrin homology domain-containing family M member 3 (plekhm3) (Xenopus laevis (African clawed frog)).